Consider the following 397-residue polypeptide: Elongation factor Tu (397 aa).

Residues lysine 10–valine 207 form the tr-type G domain. The tract at residues glycine 19–threonine 26 is G1. GTP is bound at residue glycine 19–threonine 26. Threonine 26 is a binding site for Mg(2+). Positions glycine 63–asparagine 67 are G2. Positions aspartate 84–glycine 87 are G3. GTP is bound by residues aspartate 84–histidine 88 and asparagine 139–aspartate 142. Residues asparagine 139–aspartate 142 are G4. The segment at serine 177–leucine 179 is G5.

The protein belongs to the TRAFAC class translation factor GTPase superfamily. Classic translation factor GTPase family. EF-Tu/EF-1A subfamily. In terms of assembly, monomer.

The protein localises to the cytoplasm. It carries out the reaction GTP + H2O = GDP + phosphate + H(+). Functionally, GTP hydrolase that promotes the GTP-dependent binding of aminoacyl-tRNA to the A-site of ribosomes during protein biosynthesis. This chain is Elongation factor Tu, found in Tropheryma whipplei (strain Twist) (Whipple's bacillus).